We begin with the raw amino-acid sequence, 230 residues long: Uracil-DNA glycosylase (230 aa).

D71 (proton acceptor) is an active-site residue.

It belongs to the uracil-DNA glycosylase (UDG) superfamily. UNG family.

The protein resides in the cytoplasm. The enzyme catalyses Hydrolyzes single-stranded DNA or mismatched double-stranded DNA and polynucleotides, releasing free uracil.. Excises uracil residues from the DNA which can arise as a result of misincorporation of dUMP residues by DNA polymerase or due to deamination of cytosine. This is Uracil-DNA glycosylase from Nocardioides sp. (strain ATCC BAA-499 / JS614).